The sequence spans 457 residues: Siroheme synthase (457 aa).

Residues 1-204 (MDHLPIFCQL…NDQKAITETT (204 aa)) are precorrin-2 dehydrogenase /sirohydrochlorin ferrochelatase. Residues 22–23 (DV) and 43–44 (LA) contribute to the NAD(+) site. A Phosphoserine modification is found at Ser-128. The interval 216–457 (GEVVLVGAGP…RDKLNWFSNH (242 aa)) is uroporphyrinogen-III C-methyltransferase. Pro-225 provides a ligand contact to S-adenosyl-L-methionine. The active-site Proton acceptor is the Asp-248. Lys-270 functions as the Proton donor in the catalytic mechanism. S-adenosyl-L-methionine contacts are provided by residues 301-303 (GGD), Ile-306, 331-332 (TA), Met-382, and Gly-411.

This sequence in the N-terminal section; belongs to the precorrin-2 dehydrogenase / sirohydrochlorin ferrochelatase family. The protein in the C-terminal section; belongs to the precorrin methyltransferase family.

It carries out the reaction uroporphyrinogen III + 2 S-adenosyl-L-methionine = precorrin-2 + 2 S-adenosyl-L-homocysteine + H(+). It catalyses the reaction precorrin-2 + NAD(+) = sirohydrochlorin + NADH + 2 H(+). The enzyme catalyses siroheme + 2 H(+) = sirohydrochlorin + Fe(2+). The protein operates within cofactor biosynthesis; adenosylcobalamin biosynthesis; precorrin-2 from uroporphyrinogen III: step 1/1. It participates in cofactor biosynthesis; adenosylcobalamin biosynthesis; sirohydrochlorin from precorrin-2: step 1/1. It functions in the pathway porphyrin-containing compound metabolism; siroheme biosynthesis; precorrin-2 from uroporphyrinogen III: step 1/1. Its pathway is porphyrin-containing compound metabolism; siroheme biosynthesis; siroheme from sirohydrochlorin: step 1/1. The protein operates within porphyrin-containing compound metabolism; siroheme biosynthesis; sirohydrochlorin from precorrin-2: step 1/1. In terms of biological role, multifunctional enzyme that catalyzes the SAM-dependent methylations of uroporphyrinogen III at position C-2 and C-7 to form precorrin-2 via precorrin-1. Then it catalyzes the NAD-dependent ring dehydrogenation of precorrin-2 to yield sirohydrochlorin. Finally, it catalyzes the ferrochelation of sirohydrochlorin to yield siroheme. The chain is Siroheme synthase from Escherichia coli O6:K15:H31 (strain 536 / UPEC).